The primary structure comprises 221 residues: Large ribosomal subunit protein uL3 (221 aa).

Residues G140 to S160 form a disordered region.

The protein belongs to the universal ribosomal protein uL3 family. As to quaternary structure, part of the 50S ribosomal subunit. Forms a cluster with proteins L14 and L19.

In terms of biological role, one of the primary rRNA binding proteins, it binds directly near the 3'-end of the 23S rRNA, where it nucleates assembly of the 50S subunit. The chain is Large ribosomal subunit protein uL3 from Chlamydia caviae (strain ATCC VR-813 / DSM 19441 / 03DC25 / GPIC) (Chlamydophila caviae).